A 212-amino-acid chain; its full sequence is Nascent polypeptide-associated complex subunit alpha-like protein 4 (212 aa).

Residues 25-35 are compositionally biased toward basic and acidic residues; it reads QKENDVVVEDV. The tract at residues 25 to 74 is disordered; sequence QKENDVVVEDVKDGDEDDDDVDDDDDEIADGAGENEASKQSRSEKKSRKA. Residues 36-53 are compositionally biased toward acidic residues; sequence KDGDEDDDDVDDDDDEIA. The region spanning 65–130 is the NAC-A/B domain; the sequence is SRSEKKSRKA…AKIDDMSSQL (66 aa). The region spanning 173 to 210 is the UBA domain; the sequence is VEAKDIDLVMTQAGVSRPKAVKALKESNGDIVSAIMEL.

The protein belongs to the NAC-alpha family.

Functionally, may promote appropriate targeting of ribosome-nascent polypeptide complexes. The chain is Nascent polypeptide-associated complex subunit alpha-like protein 4 from Arabidopsis thaliana (Mouse-ear cress).